The chain runs to 141 residues: MLTADDKKLLAQLWEKVAGHQDEFGNEALQRMFVTYPQTKTYFPHFDLHPGSEQVRSHGKKVAAALGNAVKSLDNISQALSELSNLHAYNLRVDPANFKLLSQCFQVVLAVHLGKDYTPEMHAAFDKFLSAVAAVLAEKYR.

The region spanning 1–141 (MLTADDKKLL…VAAVLAEKYR (141 aa)) is the Globin domain. 2 residues coordinate heme b: His58 and His87.

This sequence belongs to the globin family. In terms of assembly, heterotetramer of two alpha-D chains and two beta chains. Red blood cells.

Involved in oxygen transport from the lung to the various peripheral tissues. This Anser anser anser (Western greylag goose) protein is Hemoglobin subunit alpha-D (HBAD).